Consider the following 172-residue polypeptide: Transcriptional activator protein (172 aa).

The Nuclear localization signal signature appears at 56-71; that stretch reads KAQHRIAKHKAIRRRR. The segment at 76–93 is a zinc-finger region; it reads CGCSIFYHIKCADHGFTH. Residues 119–172 are disordered; the sequence is DHAGGRSSIHTDKDIPHPNQVQSQPQESTGSPQSIPELPSLDDIDSSFWDDIFK. Residues 137–152 are compositionally biased toward polar residues; it reads NQVQSQPQESTGSPQS. A transactivation region spans residues 158-172; the sequence is SLDDIDSSFWDDIFK.

The protein belongs to the geminiviridae transcriptional activator protein family. Monomer. Homodimer. Homooligomer. Self-interaction correlates with nuclear localization and efficient activation of transcription. Monomers suppress local silencing by interacting with and inactivating host adenosine kinase 2 (ADK2) in the cytoplasm. Interacts with and inhibits host SNF1 kinase. Binds to ssDNA. Post-translationally, phosphorylated.

It localises to the host nucleus. The protein resides in the host cytoplasm. Strong activator of the late viral genes promoters. Enhances the expression of the capsid protein and nuclear shuttle protein. Acts as a suppressor of RNA-mediated gene silencing, also known as post-transcriptional gene silencing (PTGS), a mechanism of plant viral defense that limits the accumulation of viral RNAs. Suppresses the host RNA silencing by inhibiting adenosine kinase 2 (ADK2), a kinase involved in a general methylation pathway. Also suppresses the host basal defense by interacting with and inhibiting SNF1 kinase, a key regulator of cell metabolism implicated in innate antiviral defense. Determines pathogenicity. The protein is Transcriptional activator protein of Bean golden yellow mosaic virus (isolate Puerto Rico) (BGYMV).